The following is a 223-amino-acid chain: Ubiquitin carboxyl-terminal hydrolase isozyme L1 (223 aa).

The residue at position 1 (M1) is an N-acetylmethionine. Residues 2–221 (QLKPMEINPE…VRFSAVALCK (220 aa)) form the UCH catalytic domain. The interval 5 to 10 (PMEINP) is interaction with ubiquitin. C90 functions as the Nucleophile in the catalytic mechanism. S125 carries the post-translational modification Phosphoserine. H161 serves as the catalytic Proton donor. The tract at residues 211-216 (EVRFSA) is interaction with ubiquitin. C220 is lipidated: S-farnesyl cysteine. Positions 221–223 (KAA) are cleaved as a propeptide — removed in mature form.

This sequence belongs to the peptidase C12 family. As to quaternary structure, monomer. Homodimer. Interacts with COPS5 and SNCA. In terms of processing, O-glycosylated.

The protein localises to the cytoplasm. It localises to the endoplasmic reticulum membrane. It catalyses the reaction Thiol-dependent hydrolysis of ester, thioester, amide, peptide and isopeptide bonds formed by the C-terminal Gly of ubiquitin (a 76-residue protein attached to proteins as an intracellular targeting signal).. Its function is as follows. Ubiquitin-protein hydrolase involved both in the processing of ubiquitin precursors and of ubiquitinated proteins. This enzyme is a thiol protease that recognizes and hydrolyzes a peptide bond at the C-terminal glycine of ubiquitin. Also binds to free monoubiquitin and may prevent its degradation in lysosomes. The homodimer may have ATP-independent ubiquitin ligase activity. In Sus scrofa (Pig), this protein is Ubiquitin carboxyl-terminal hydrolase isozyme L1 (UCHL1).